A 534-amino-acid polypeptide reads, in one-letter code: MKFDPQKYRELAEKDFEAAWKAGKEILAERSPNELYPRVGFSFGKEHPLFATIQRLREAYLSIGFSEVVNPLIVEDVHVKKQFGREALAVLDRCFYLATLPKPNVGISAEKIRQIEAITKREVDSKPLQEIFHRYKKGEIDGDDLSYLIAEVLDVDDITAVKILDEVFPEFKELKPISSTLTLRSHMTTGWFITLSHIADKLPLPIKLFSIDRCFRREQGEDATRLYTYFSASCVLVDEELSVDDGKAVAEALLRQFGFENFRFRKDEKRSKYYIPDTQTEVFAFHPKLVGSSTKYSDGWIEIATFGIYSPTALAEYDIPYPVMNLGLGVERLAMILYGYDDVRKMVYPQIHGEIKLSDLDIAREIKVKEVPQTAVGLKIAQSIVETAEKHASEPSPCSFLAFEGEMMGRNVRVYVVEEEENTKLCGPAYANEVVVYKGDIYGIPKTKKWRSFFEEGVPTGIRYIDGFAYYAARKVEEAAMREQEEVKVKARIVENLSDINLYIHENVRRYILWKKGKIDVRGPLFVTVKAEIE.

Substrate is bound by residues 186 to 188 (HMT), 231 to 233 (SAS), 273 to 274 (YY), and N325.

This sequence belongs to the class-II aminoacyl-tRNA synthetase family. O-phosphoseryl-tRNA(Cys) synthetase subfamily. Homotetramer. Interacts with SepCysS.

It catalyses the reaction tRNA(Cys) + O-phospho-L-serine + ATP = O-phospho-L-seryl-tRNA(Cys) + AMP + diphosphate. Catalyzes the attachment of O-phosphoserine (Sep) to tRNA(Cys). This chain is O-phosphoserine--tRNA(Cys) ligase (sepS), found in Archaeoglobus fulgidus (strain ATCC 49558 / DSM 4304 / JCM 9628 / NBRC 100126 / VC-16).